A 127-amino-acid polypeptide reads, in one-letter code: MKVLENLVYTKTHEWVRFEDETTALVGLTDYAQQTLGQLVFVNLPQEGDETVTGESFADVESVKAVSDVYCPVTGVVSEINEELLDAPEKINDTPYEAWFAKITDITEKEEFLSPEEYEEFVKKEME.

Positions 23-104 (TALVGLTDYA…PYEAWFAKIT (82 aa)) constitute a Lipoyl-binding domain. The residue at position 64 (lysine 64) is an N6-lipoyllysine.

The protein belongs to the GcvH family. As to quaternary structure, the glycine cleavage system is composed of four proteins: P, T, L and H. (R)-lipoate is required as a cofactor.

The glycine cleavage system catalyzes the degradation of glycine. The H protein shuttles the methylamine group of glycine from the P protein to the T protein. The protein is Glycine cleavage system H protein of Lachnoclostridium phytofermentans (strain ATCC 700394 / DSM 18823 / ISDg) (Clostridium phytofermentans).